The chain runs to 343 residues: UDP-3-O-acylglucosamine N-acyltransferase (343 aa).

H236 acts as the Proton acceptor in catalysis.

This sequence belongs to the transferase hexapeptide repeat family. LpxD subfamily. In terms of assembly, homotrimer.

The catalysed reaction is a UDP-3-O-[(3R)-3-hydroxyacyl]-alpha-D-glucosamine + a (3R)-hydroxyacyl-[ACP] = a UDP-2-N,3-O-bis[(3R)-3-hydroxyacyl]-alpha-D-glucosamine + holo-[ACP] + H(+). It functions in the pathway bacterial outer membrane biogenesis; LPS lipid A biosynthesis. Catalyzes the N-acylation of UDP-3-O-acylglucosamine using 3-hydroxyacyl-ACP as the acyl donor. Is involved in the biosynthesis of lipid A, a phosphorylated glycolipid that anchors the lipopolysaccharide to the outer membrane of the cell. This chain is UDP-3-O-acylglucosamine N-acyltransferase, found in Syntrophotalea carbinolica (strain DSM 2380 / NBRC 103641 / GraBd1) (Pelobacter carbinolicus).